The chain runs to 1311 residues: Kinase and exchange factor for Rac A (1311 aa).

Residues 18-316 (LVFKDIIGKG…STIVTILESI (299 aa)) form the Protein kinase domain. Residues 24–32 (IGKGNFGCV) and K45 contribute to the ATP site. The active-site Proton acceptor is the D138. Disordered stretches follow at residues 169-201 (NGSD…KNNG), 360-426 (QQQS…TTTT), and 446-471 (PLSK…LIGS). Residues 451–471 (QQQQQRNQNSSIIDNNSLIGS) show a composition bias toward low complexity. One can recognise an IQ domain in the interval 650–679 (ELNLIIKLQSRIRGWLVRRRYKIFLSNWKL). Residues 691–927 (QWIRLFNQLI…RETSNYIQSQ (237 aa)) enclose the DH domain. 2 stretches are compositionally biased toward low complexity: residues 994–1021 (SKYN…TNSN) and 1031–1044 (STSN…GNNN). Disordered stretches follow at residues 994 to 1044 (SKYN…GNNN), 1114 to 1145 (NNPN…NGSI), and 1208 to 1311 (GTST…FSKD). Positions 1117 to 1137 (NGGGSNNNSIGGGGGGRGGSG) are enriched in gly residues. A compositionally biased stretch (polar residues) spans 1208-1229 (GTSTPERKTSLVNMSPSTTSSL). Residues 1230–1245 (NNIDSNYNNNNNNVTN) show a composition bias toward low complexity. A compositionally biased stretch (polar residues) spans 1246 to 1257 (TPIKSVTSSPSI). The segment covering 1263–1276 (NDNNQQPQLPSQPN) has biased composition (low complexity). Polar residues predominate over residues 1277–1287 (EEFQFTVPTTP). The segment covering 1290 to 1303 (KKKKRGSFSSKLKR) has biased composition (basic residues).

Belongs to the protein kinase superfamily. TKL Ser/Thr protein kinase family. Requires Mg(2+) as cofactor.

The enzyme catalyses L-seryl-[protein] + ATP = O-phospho-L-seryl-[protein] + ADP + H(+). The catalysed reaction is L-threonyl-[protein] + ATP = O-phospho-L-threonyl-[protein] + ADP + H(+). This is Kinase and exchange factor for Rac A (kxcA) from Dictyostelium discoideum (Social amoeba).